The chain runs to 209 residues: Uracil phosphoribosyltransferase (209 aa).

5-phospho-alpha-D-ribose 1-diphosphate-binding positions include arginine 77, arginine 102, and 129–137; that span reads DPMLATGVS. Residues isoleucine 192 and 197-199 contribute to the uracil site; that span reads GDA. Residue aspartate 198 coordinates 5-phospho-alpha-D-ribose 1-diphosphate.

This sequence belongs to the UPRTase family. The cofactor is Mg(2+).

It catalyses the reaction UMP + diphosphate = 5-phospho-alpha-D-ribose 1-diphosphate + uracil. The protein operates within pyrimidine metabolism; UMP biosynthesis via salvage pathway; UMP from uracil: step 1/1. Allosterically activated by GTP. Its function is as follows. Catalyzes the conversion of uracil and 5-phospho-alpha-D-ribose 1-diphosphate (PRPP) to UMP and diphosphate. This is Uracil phosphoribosyltransferase from Metamycoplasma arthritidis (strain 158L3-1) (Mycoplasma arthritidis).